A 368-amino-acid polypeptide reads, in one-letter code: MAAASEERMAEEGGGGHGDGGSCSAAGSAQRQPPAPPSQAPPPGSQAPAAPALAPDHLPQNNTLVALPIVAIENILSFMSYDEISQLRLVCKRMDLVCQRMLNQGFLKVERFHNLCQKQVKAQLPRRESERRNHSLARHADILAAVETRLSLLNMTFMKYVDSNLCCFIPGKVIDEIYRVLRYVNSTRAPQRAHEVLQELRDISSMAMEYFDEKIVPILKRKLPGSDVSGRLMGSPPVPGPSAALTTMQLFSKQNPSRQEVTKLQQQVRTNGAGVTVLRREISELRTKVQEQQKQLQDQDQKLLEQTQIIGEQNARLAELERKLREVMESAVGTSSGSGQSEESPRKRRKATEAIDSLRKSKRLRNRK.

Residues 1-11 (MAAASEERMAE) show a composition bias toward basic and acidic residues. Residues 1 to 56 (MAAASEERMAEEGGGGHGDGGSCSAAGSAQRQPPAPPSQAPPPGSQAPAAPALAPD) are disordered. The segment covering 12–21 (EGGGGHGDGG) has biased composition (gly residues). Residues 22–32 (SCSAAGSAQRQ) show a composition bias toward low complexity. The span at 33–45 (PPAPPSQAPPPGS) shows a compositional bias: pro residues. Residues 46-55 (QAPAAPALAP) are compositionally biased toward low complexity. The 49-residue stretch at 61-109 (NNTLVALPIVAIENILSFMSYDEISQLRLVCKRMDLVCQRMLNQGFLKV) folds into the F-box domain. Phosphoserine is present on residues S235 and S242. T270 carries the phosphothreonine modification. The segment at 328-368 (MESAVGTSSGSGQSEESPRKRRKATEAIDSLRKSKRLRNRK) is disordered. S344 bears the Phosphoserine mark.

In terms of assembly, part of a SCF (SKP1-cullin-F-box) protein ligase complex.

Its subcellular location is the chromosome. The protein localises to the centromere. It is found in the kinetochore. Probably recognizes and binds to some phosphorylated proteins and promotes their ubiquitination and degradation. The chain is F-box only protein 28 (Fbxo28) from Mus musculus (Mouse).